We begin with the raw amino-acid sequence, 675 residues long: UvrABC system protein B (675 aa).

The Helicase ATP-binding domain occupies 32 to 417 (EGLSDGLAYQ…EHAGQVVEQV (386 aa)). 45-52 (GVTGSGKT) lines the ATP pocket. The Beta-hairpin motif lies at 98–121 (YYDYYQPEAYVPSRDLFIEKDSAI). Residues 436-602 (QVDDLMSEIN…QIKKQVKDII (167 aa)) enclose the Helicase C-terminal domain. One can recognise a UVR domain in the interval 634–669 (IKEIAKLEKAMQQAARDLQFEEAAVLRDRIRDIKEN).

It belongs to the UvrB family. Forms a heterotetramer with UvrA during the search for lesions. Interacts with UvrC in an incision complex.

It localises to the cytoplasm. In terms of biological role, the UvrABC repair system catalyzes the recognition and processing of DNA lesions. A damage recognition complex composed of 2 UvrA and 2 UvrB subunits scans DNA for abnormalities. Upon binding of the UvrA(2)B(2) complex to a putative damaged site, the DNA wraps around one UvrB monomer. DNA wrap is dependent on ATP binding by UvrB and probably causes local melting of the DNA helix, facilitating insertion of UvrB beta-hairpin between the DNA strands. Then UvrB probes one DNA strand for the presence of a lesion. If a lesion is found the UvrA subunits dissociate and the UvrB-DNA preincision complex is formed. This complex is subsequently bound by UvrC and the second UvrB is released. If no lesion is found, the DNA wraps around the other UvrB subunit that will check the other stand for damage. This Neisseria meningitidis serogroup B (strain ATCC BAA-335 / MC58) protein is UvrABC system protein B.